The chain runs to 247 residues: Carboxy-S-adenosyl-L-methionine synthase (247 aa).

S-adenosyl-L-methionine-binding positions include tyrosine 40, 65–67 (GSS), 90–91 (DN), 122–123 (DI), asparagine 137, and arginine 204.

The protein belongs to the class I-like SAM-binding methyltransferase superfamily. Cx-SAM synthase family. As to quaternary structure, homodimer.

The catalysed reaction is prephenate + S-adenosyl-L-methionine = carboxy-S-adenosyl-L-methionine + 3-phenylpyruvate + H2O. Functionally, catalyzes the conversion of S-adenosyl-L-methionine (SAM) to carboxy-S-adenosyl-L-methionine (Cx-SAM). The protein is Carboxy-S-adenosyl-L-methionine synthase of Pseudomonas savastanoi pv. phaseolicola (strain 1448A / Race 6) (Pseudomonas syringae pv. phaseolicola (strain 1448A / Race 6)).